A 254-amino-acid polypeptide reads, in one-letter code: Lipid uptake coordinator A (254 aa).

Transmembrane regions (helical) follow at residues 5–25 (VAVL…FYFV), 44–64 (LRIA…FTLL), 85–105 (IMAH…EVWL), and 114–134 (LFGI…GFYL). A disordered region spans residues 143–254 (PPPKPLKPKK…SGVQVAKVDE (112 aa)). Basic residues predominate over residues 148–163 (LKPKKPKQRRLRRKKT). Acidic residues predominate over residues 169 to 191 (AEPEAAEEAENTELAAQEDEEAV). Low complexity predominate over residues 192–220 (EAPPESIESPGGEPESATREAPAAETATA). Basic residues predominate over residues 227-244 (LRNRRPTGKTSHRRRRTR).

As to quaternary structure, interacts with the Mce1 and Mce4 accessory subunits Rv0199/OmamA, Rv0177/Mam1C and Rv3492c/Mam4B.

The protein resides in the cell membrane. Required for the import of both fatty acids and cholesterol during growth in macrophages and in axenic culture. Facilitates the uptake of these lipids by stabilizing protein subunits of the Mce1 and Mce4 multi-subunit transporters, which transport fatty acids and cholesterol, respectively. Required for full virulence in vivo. This chain is Lipid uptake coordinator A, found in Mycobacterium tuberculosis (strain ATCC 25618 / H37Rv).